We begin with the raw amino-acid sequence, 192 residues long: Pyridoxal 5'-phosphate synthase subunit PdxT (192 aa).

50 to 52 contacts L-glutamine; the sequence is GES. The active-site Nucleophile is the C82. L-glutamine is bound by residues R109 and 136-137; that span reads IR. Active-site charge relay system residues include H172 and E174.

This sequence belongs to the glutaminase PdxT/SNO family. As to quaternary structure, in the presence of PdxS, forms a dodecamer of heterodimers. Only shows activity in the heterodimer.

It catalyses the reaction aldehydo-D-ribose 5-phosphate + D-glyceraldehyde 3-phosphate + L-glutamine = pyridoxal 5'-phosphate + L-glutamate + phosphate + 3 H2O + H(+). It carries out the reaction L-glutamine + H2O = L-glutamate + NH4(+). The protein operates within cofactor biosynthesis; pyridoxal 5'-phosphate biosynthesis. Catalyzes the hydrolysis of glutamine to glutamate and ammonia as part of the biosynthesis of pyridoxal 5'-phosphate. The resulting ammonia molecule is channeled to the active site of PdxS. The polypeptide is Pyridoxal 5'-phosphate synthase subunit PdxT (Haemophilus influenzae (strain PittGG)).